The chain runs to 217 residues: U exon protein (217 aa).

Disordered stretches follow at residues 79–113 (ISGE…GGRV) and 171–217 (KEAP…WQRR). Over residues 188–197 (RGQRGRKRRC) the composition is skewed to basic residues. The segment covering 202–217 (GGFQQPTGANQAWQRR) has biased composition (polar residues).

The protein belongs to the adenoviridae U exon protein family.

Its subcellular location is the host nucleus. The protein resides in the host nucleoplasm. The protein localises to the host nucleolus. Functionally, might play a role in viral replication since it is associated with viral replication centers. Seems to have an effect on DBP localization. In Human adenovirus C serotype 5 (HAdV-5), this protein is U exon protein.